The following is a 238-amino-acid chain: MSSIALGVNIDHIATLRNARNTEYPDLVEIANIAVNNGADFITVHLREDRRHIRDSDVFRLKDNLNVPLNLEIAAIDEMLAIAIAVQPECVCLVPEKRQELTTEGGLDVKNMFTYLMPFITQLHNHNIKVTLFVEPDINQINYAKKLSVDNIELHTGVYCNHNTQNELNRILEAAKHCYTNKIECHAGHGLDYQSAATIARVPYISALNIGHFLICEAVLHGIGTSIYKMKKVITNPL.

Position 9 (Asn9) interacts with 3-amino-2-oxopropyl phosphate. 11–12 is a binding site for 1-deoxy-D-xylulose 5-phosphate; it reads DH. Arg20 provides a ligand contact to 3-amino-2-oxopropyl phosphate. His45 (proton acceptor) is an active-site residue. 1-deoxy-D-xylulose 5-phosphate contacts are provided by Arg47 and His52. Catalysis depends on Glu72, which acts as the Proton acceptor. Thr102 lines the 1-deoxy-D-xylulose 5-phosphate pocket. The active-site Proton donor is His189. 3-amino-2-oxopropyl phosphate contacts are provided by residues Gly190 and 211–212; that span reads GH.

This sequence belongs to the PNP synthase family. Homooctamer; tetramer of dimers.

It localises to the cytoplasm. The enzyme catalyses 3-amino-2-oxopropyl phosphate + 1-deoxy-D-xylulose 5-phosphate = pyridoxine 5'-phosphate + phosphate + 2 H2O + H(+). It functions in the pathway cofactor biosynthesis; pyridoxine 5'-phosphate biosynthesis; pyridoxine 5'-phosphate from D-erythrose 4-phosphate: step 5/5. Its function is as follows. Catalyzes the complicated ring closure reaction between the two acyclic compounds 1-deoxy-D-xylulose-5-phosphate (DXP) and 3-amino-2-oxopropyl phosphate (1-amino-acetone-3-phosphate or AAP) to form pyridoxine 5'-phosphate (PNP) and inorganic phosphate. The chain is Pyridoxine 5'-phosphate synthase from Ehrlichia ruminantium (strain Welgevonden).